Consider the following 287-residue polypeptide: MDEIVKNIREGTHVLLPFYETLPELNLSLGKSPLPSLEYGANYFLQISRVNDLNRMPTDMLKLFTHDIMLPESDLDKVYEILKINSVKYYGRSTKADAVVADLSARNKLFKRERDAIKSNNHLTENNLYISDYKMLTFDVFRPLFDFVNEKYCIIKLPTLFGRGVIDTMRIYCSLFKNVRLLKCVSDSWLKDSAIMVASDVCKKNLDLFMSHVKSVTKSSSWKDVNSVQFSILNNPVDTEFINKFLEFSNRVYEALYYVHSLLYSSMTSDSKSIENKHQRRLVKLLL.

The protein belongs to the orthopoxvirus mRNA-capping enzyme regulatory subunit family. As to quaternary structure, interacts with the catalytic subunit OPG113.

It localises to the virion. Its function is as follows. Regulatory subunit of the mRNA cap enzyme which stabilizes the catalytic subunit and enhances its methyltransferase activity through an allosteric mechanism. Heterodimeric mRNA capping enzyme catalyzes the linkage of a N7-methyl-guanosine moiety to the first transcribed nucleotide (cap 0 structure), whereas the methyltransferase OPG102 is responsible for a second methylation at the 2'-O position of the ribose (cap 1 structure). Also involved in early viral gene transcription termination and intermediate viral gene transcription initiation. Early gene transcription termination requires the termination factor VTF, the DNA-dependent ATPase NPH-I/OPG123 and the RAP94/OPG109 subunit of the viral RNA polymerase, as well as the presence of a specific termination motif. Binds, together with RAP94/OPG109, to the termination motif 5'-UUUUUNU-3' in the nascent early mRNA. The polypeptide is mRNA-capping enzyme regulatory subunit OPG124 (OPG124) (Bos taurus (Bovine)).